The following is a 903-amino-acid chain: HTH-type transcriptional regulator MalT (903 aa).

ATP is bound at residue 39–46 (CPAGYGKT). The HTH luxR-type domain maps to 832 to 897 (ELIRTSPLTQ…EAVQQAQRLL (66 aa)). The segment at residues 856 to 875 (NDQIANELDVAATTIKTHIR) is a DNA-binding region (H-T-H motif).

It belongs to the MalT family. As to quaternary structure, monomer in solution. Oligomerizes to an active state in the presence of the positive effectors ATP and maltotriose.

With respect to regulation, activated by ATP and maltotriose, which are both required for DNA binding. Its function is as follows. Positively regulates the transcription of the maltose regulon whose gene products are responsible for uptake and catabolism of malto-oligosaccharides. Specifically binds to the promoter region of its target genes, recognizing a short DNA motif called the MalT box. This Yersinia pseudotuberculosis serotype O:1b (strain IP 31758) protein is HTH-type transcriptional regulator MalT.